The chain runs to 321 residues: Aspartate carbamoyltransferase catalytic subunit (321 aa).

Residues Arg-65 and Thr-66 each contribute to the carbamoyl phosphate site. Lys-93 is an L-aspartate binding site. The carbamoyl phosphate site is built by Arg-115, His-143, and Gln-146. L-aspartate contacts are provided by Arg-176 and Arg-230. 2 residues coordinate carbamoyl phosphate: Gly-271 and Pro-272.

The protein belongs to the aspartate/ornithine carbamoyltransferase superfamily. ATCase family. As to quaternary structure, heterododecamer (2C3:3R2) of six catalytic PyrB chains organized as two trimers (C3), and six regulatory PyrI chains organized as three dimers (R2).

It catalyses the reaction carbamoyl phosphate + L-aspartate = N-carbamoyl-L-aspartate + phosphate + H(+). It participates in pyrimidine metabolism; UMP biosynthesis via de novo pathway; (S)-dihydroorotate from bicarbonate: step 2/3. Catalyzes the condensation of carbamoyl phosphate and aspartate to form carbamoyl aspartate and inorganic phosphate, the committed step in the de novo pyrimidine nucleotide biosynthesis pathway. This is Aspartate carbamoyltransferase catalytic subunit from Bartonella tribocorum (strain CIP 105476 / IBS 506).